We begin with the raw amino-acid sequence, 302 residues long: MAEITAQMVKELREITGLGMMECKKALTEASGDMKAAEDLLRIKSGAKASKAAGRTAAEGIVAAHIARDGKSGALVEVNCETDFVARNEDFIGFAHSLAELLTTESIGDNEALANARLSNGESVEEFRKALVMKLGENISIRRFARHQVAGAQDRLASYLHGAKIGVMVDYTGGDPALGKDLAMHIAASKPVCVSSEQVSPELLERERQIYTAQAAESGKPADIVARMVDGRIAKYLAEITLLGQPFVKNPDQTVKQLLAEKSAQVNGFTLYIVGEGIEKKSGDFAAEVMAQVGQAKQEKAS.

The interval 82 to 85 (TDFV) is involved in Mg(2+) ion dislocation from EF-Tu.

It belongs to the EF-Ts family.

The protein localises to the cytoplasm. Functionally, associates with the EF-Tu.GDP complex and induces the exchange of GDP to GTP. It remains bound to the aminoacyl-tRNA.EF-Tu.GTP complex up to the GTP hydrolysis stage on the ribosome. This chain is Elongation factor Ts, found in Nitrosospira multiformis (strain ATCC 25196 / NCIMB 11849 / C 71).